The following is a 693-amino-acid chain: ATP-dependent DNA helicase RecG (693 aa).

The wedge domain stretch occupies residues 48-146; sequence THLYPIGELL…GDLSTPELQE (99 aa). Positions 283-448 constitute a Helicase ATP-binding domain; sequence DMALDVPMMR…AYADLDTSVI (166 aa). 296–303 provides a ligand contact to ATP; the sequence is GDVGSGKT. The DEAH box signature appears at 397-400; sequence DEQH. The region spanning 482–628 is the Helicase C-terminal domain; sequence EGRQAYWVCT…GFVIAQKDLE (147 aa).

Belongs to the helicase family. RecG subfamily. In terms of assembly, monomer.

It catalyses the reaction Couples ATP hydrolysis with the unwinding of duplex DNA by translocating in the 3'-5' direction.. It carries out the reaction ATP + H2O = ADP + phosphate + H(+). Plays a critical role in recombination and DNA repair. Helps process Holliday junction intermediates to mature products by catalyzing branch migration. Has replication fork regression activity, unwinds stalled or blocked replication forks to make a HJ that can be resolved. Has a DNA unwinding activity characteristic of a DNA helicase with 3'-5' polarity. Its function is as follows. Plays a role in recovery after DNA ADP-ribosylation. This is ATP-dependent DNA helicase RecG from Escherichia coli O127:H6 (strain E2348/69 / EPEC).